A 32-amino-acid chain; its full sequence is Cytochrome b6-f complex subunit 7 (32 aa).

A helical membrane pass occupies residues 9 to 27 (AVLSSVLVLVGLAIGFLLL).

It belongs to the PetM family. In terms of assembly, the 4 large subunits of the cytochrome b6-f complex are cytochrome b6, subunit IV (17 kDa polypeptide, PetD), cytochrome f and the Rieske protein, while the 4 small subunits are PetG, PetL, PetM and PetN. The complex functions as a dimer.

It localises to the plastid. It is found in the chloroplast thylakoid membrane. Its function is as follows. Component of the cytochrome b6-f complex, which mediates electron transfer between photosystem II (PSII) and photosystem I (PSI), cyclic electron flow around PSI, and state transitions. The protein is Cytochrome b6-f complex subunit 7 of Pyropia yezoensis (Susabi-nori).